The primary structure comprises 681 residues: Potassium-transporting ATPase ATP-binding subunit 1 (681 aa).

4 helical membrane-spanning segments follow: residues 30-50 (LLVYVGAILATSLYFLGFFGI), 59-79 (LAIALILWFTVLFANFAEAIA), 216-236 (ILLVTLSIIFLAVSATLLPFT), and 255-275 (IALLVCLAPTTIGALLSSIGI). The active-site 4-aspartylphosphate intermediate is D306. ATP contacts are provided by residues D343, E347, 376–383 (FTATTRMS), and K394. Mg(2+) contacts are provided by D517 and D521. 3 consecutive transmembrane segments (helical) span residues 587–607 (FAIIPVLFYGIFPQLEALNLM), 615–635 (AILSAIIYNAVIIIFLIPLSL), and 661–681 (LIAPFIAIKLIDMLLTVLGIV).

Belongs to the cation transport ATPase (P-type) (TC 3.A.3) family. Type IA subfamily. The system is composed of three essential subunits: KdpA, KdpB and KdpC.

It is found in the cell membrane. It carries out the reaction K(+)(out) + ATP + H2O = K(+)(in) + ADP + phosphate + H(+). Part of the high-affinity ATP-driven potassium transport (or Kdp) system, which catalyzes the hydrolysis of ATP coupled with the electrogenic transport of potassium into the cytoplasm. This subunit is responsible for energy coupling to the transport system and for the release of the potassium ions to the cytoplasm. In Listeria innocua serovar 6a (strain ATCC BAA-680 / CLIP 11262), this protein is Potassium-transporting ATPase ATP-binding subunit 1.